Reading from the N-terminus, the 250-residue chain is 1-(5-phosphoribosyl)-5-[(5-phosphoribosylamino)methylideneamino] imidazole-4-carboxamide isomerase (250 aa).

Asp-12 functions as the Proton acceptor in the catalytic mechanism. Asp-133 functions as the Proton donor in the catalytic mechanism.

It belongs to the HisA/HisF family.

The protein localises to the cytoplasm. It catalyses the reaction 1-(5-phospho-beta-D-ribosyl)-5-[(5-phospho-beta-D-ribosylamino)methylideneamino]imidazole-4-carboxamide = 5-[(5-phospho-1-deoxy-D-ribulos-1-ylimino)methylamino]-1-(5-phospho-beta-D-ribosyl)imidazole-4-carboxamide. Its pathway is amino-acid biosynthesis; L-histidine biosynthesis; L-histidine from 5-phospho-alpha-D-ribose 1-diphosphate: step 4/9. The polypeptide is 1-(5-phosphoribosyl)-5-[(5-phosphoribosylamino)methylideneamino] imidazole-4-carboxamide isomerase (Zymomonas mobilis subsp. mobilis (strain ATCC 31821 / ZM4 / CP4)).